We begin with the raw amino-acid sequence, 85 residues long: Defensin-like protein 112 (85 aa).

The signal sequence occupies residues 1 to 24 (MAISKKMLTTFVLTILLAVSFVHC). Cystine bridges form between C40–C80, C46–C71, C56–C78, and C60–C79.

It belongs to the DEFL family.

It localises to the secreted. This Arabidopsis thaliana (Mouse-ear cress) protein is Defensin-like protein 112.